Reading from the N-terminus, the 203-residue chain is Large ribosomal subunit protein bL25 (203 aa).

Belongs to the bacterial ribosomal protein bL25 family. CTC subfamily. In terms of assembly, part of the 50S ribosomal subunit; part of the 5S rRNA/L5/L18/L25 subcomplex. Contacts the 5S rRNA. Binds to the 5S rRNA independently of L5 and L18.

Its function is as follows. This is one of the proteins that binds to the 5S RNA in the ribosome where it forms part of the central protuberance. The protein is Large ribosomal subunit protein bL25 of Dechloromonas aromatica (strain RCB).